Here is a 324-residue protein sequence, read N- to C-terminus: Probable pectinesterase A (324 aa).

A signal peptide spans 1-19 (MHLPSLVLGLLGLGLTASA). Asn27 is a glycosylation site (N-linked (GlcNAc...) asparagine). Gln142 serves as a coordination point for substrate. Asp165 (proton donor) is an active-site residue. Asp186 functions as the Nucleophile in the catalytic mechanism. Asn191 carries N-linked (GlcNAc...) asparagine glycosylation. Residues Arg246 and Trp248 each contribute to the substrate site.

It belongs to the pectinesterase family.

The protein resides in the secreted. The enzyme catalyses [(1-&gt;4)-alpha-D-galacturonosyl methyl ester](n) + n H2O = [(1-&gt;4)-alpha-D-galacturonosyl](n) + n methanol + n H(+). Its pathway is glycan metabolism; pectin degradation; 2-dehydro-3-deoxy-D-gluconate from pectin: step 1/5. Involved in maceration and soft-rotting of plant tissue. In Neosartorya fischeri (strain ATCC 1020 / DSM 3700 / CBS 544.65 / FGSC A1164 / JCM 1740 / NRRL 181 / WB 181) (Aspergillus fischerianus), this protein is Probable pectinesterase A (pmeA).